We begin with the raw amino-acid sequence, 135 residues long: C-type lectin PAL (135 aa).

4 disulfides stabilise this stretch: Cys-3/Cys-14, Cys-31/Cys-131, Cys-38/Cys-133, and Cys-106/Cys-123. Residues 10–132 form the C-type lectin domain; that stretch reads MNGLCYKIFD…CGSKNAFLCQ (123 aa). Positions 96, 98, 104, 119, and 120 each coordinate Ca(2+). Positions 96-98 match the Galactose-binding motif; it reads QPD.

Belongs to the true venom lectin family. In terms of assembly, homodimer; disulfide-linked. Expressed by the venom gland.

It is found in the secreted. Functionally, galactose-binding lectin which recognizes specific carbohydrate structures and agglutinates a variety of animal cells by binding to cell-surface glycoproteins and glycolipids. This is a calcium-dependent lectin. Shows high hemagglutinating activity (MHC is 0.25 ug/ml on rabbit erythrocytes). The chain is C-type lectin PAL from Bitis arietans (African puff adder).